The chain runs to 529 residues: Beta-galactoside alpha-2,6-sialyltransferase 2 (529 aa).

The Cytoplasmic segment spans residues 1–11 (MKPHLKQWRQR). A helical; Signal-anchor for type II membrane protein membrane pass occupies residues 12–32 (MLFGIFAWGLLFLLIFIYFTD). The Lumenal segment spans residues 33-529 (SNPAEPVPSS…PAPSPVIPHS (497 aa)). O-linked (GalNAc...) serine glycosylation is present at serine 69. Asparagine 211 carries N-linked (GlcNAc...) asparagine glycosylation. Disulfide bonds link cysteine 253–cysteine 519, cysteine 296–cysteine 448, and cysteine 466–cysteine 477.

It belongs to the glycosyltransferase 29 family. In terms of processing, O-glycosylated. As to expression, weakly expressed in some tissues, such as small intestine, colon and fetal brain.

The protein localises to the golgi apparatus. The protein resides in the golgi stack membrane. It catalyses the reaction a beta-D-galactoside + CMP-N-acetyl-beta-neuraminate = an N-acetyl-alpha-neuraminyl-(2-&gt;6)-beta-D-galactosyl derivative + CMP + H(+). In terms of biological role, transfers sialic acid from the donor of substrate CMP-sialic acid to galactose containing acceptor substrates. Has alpha-2,6-sialyltransferase activity toward oligosaccharides that have the Gal-beta-1,4-GlcNAc sequence at the non-reducing end of their carbohydrate groups, but it has weak or no activities toward glycoproteins and glycolipids. The polypeptide is Beta-galactoside alpha-2,6-sialyltransferase 2 (ST6GAL2) (Homo sapiens (Human)).